The following is a 305-amino-acid chain: NADH-cytochrome b5 reductase 1 (305 aa).

Residues 8 to 28 (VLLASLGVGLLTLLGVALGAY) form a helical membrane-spanning segment. Residues 44–156 (NEKYQLRLLD…RGPSGLLTYA (113 aa)) enclose the FAD-binding FR-type domain. Residues 136-166 (DSLKIGDVVEFRGPSGLLTYAGKGKFNIQPN) and 175-210 (VARNLGMIAGGTGITPMLQLIRAILKDPEDPTQCFL) each bind FAD.

It belongs to the flavoprotein pyridine nucleotide cytochrome reductase family. FAD serves as cofactor.

It is found in the membrane. The catalysed reaction is 2 Fe(III)-[cytochrome b5] + NADH = 2 Fe(II)-[cytochrome b5] + NAD(+) + H(+). In terms of biological role, NADH-cytochrome b5 reductases are involved in desaturation and elongation of fatty acids, cholesterol biosynthesis, drug metabolism, and, in erythrocyte, methemoglobin reduction. This Bos taurus (Bovine) protein is NADH-cytochrome b5 reductase 1 (CYB5R1).